The following is a 602-amino-acid chain: Elongation factor 4 (602 aa).

In terms of domain architecture, tr-type G spans 7–189 (RNIRNFSIIA…AIVHRIPPPK (183 aa)). Residues 19–24 (DHGKST) and 136–139 (NKID) each bind GTP.

The protein belongs to the TRAFAC class translation factor GTPase superfamily. Classic translation factor GTPase family. LepA subfamily.

The protein localises to the cell inner membrane. It carries out the reaction GTP + H2O = GDP + phosphate + H(+). Functionally, required for accurate and efficient protein synthesis under certain stress conditions. May act as a fidelity factor of the translation reaction, by catalyzing a one-codon backward translocation of tRNAs on improperly translocated ribosomes. Back-translocation proceeds from a post-translocation (POST) complex to a pre-translocation (PRE) complex, thus giving elongation factor G a second chance to translocate the tRNAs correctly. Binds to ribosomes in a GTP-dependent manner. The chain is Elongation factor 4 from Stenotrophomonas maltophilia (strain R551-3).